A 543-amino-acid chain; its full sequence is Cobyric acid synthase (543 aa).

Residues 260–483 (MLDIVLVDLP…LHGVFDADGF (224 aa)) form the GATase cobBQ-type domain. C346 (nucleophile) is an active-site residue. H475 is an active-site residue.

The protein belongs to the CobB/CobQ family. CobQ subfamily.

Its pathway is cofactor biosynthesis; adenosylcobalamin biosynthesis. Catalyzes amidations at positions B, D, E, and G on adenosylcobyrinic A,C-diamide. NH(2) groups are provided by glutamine, and one molecule of ATP is hydrogenolyzed for each amidation. This Nitratidesulfovibrio vulgaris (strain ATCC 29579 / DSM 644 / CCUG 34227 / NCIMB 8303 / VKM B-1760 / Hildenborough) (Desulfovibrio vulgaris) protein is Cobyric acid synthase.